Reading from the N-terminus, the 684-residue chain is Beta-mannosyltransferase 1 (684 aa).

Residues 1–28 (MDKFIQSFSHQYLDSSSSLKLTARRKRK) are Cytoplasmic-facing. A helical transmembrane segment spans residues 29–49 (LTILGLFLFSLISLMIIISYS). At 50 to 684 (NNNILPGLSG…KFCKIYGETF (635 aa)) the chain is on the extracellular side. Asparagine 297 carries N-linked (GlcNAc...) asparagine glycosylation.

Belongs to the BMT family.

The protein resides in the membrane. Functionally, beta-mannosyltransferase involved in cell wall biosynthesis. Required for addition of the first beta-mannose residue to acid-stable fraction of cell wall phosphopeptidomannan. Plays a key role in reducing host inflammatory response. In Candida albicans (strain SC5314 / ATCC MYA-2876) (Yeast), this protein is Beta-mannosyltransferase 1 (BMT1).